Here is a 203-residue protein sequence, read N- to C-terminus: Glycerol-3-phosphate acyltransferase (203 aa).

The next 4 membrane-spanning stretches (helical) occupy residues 7–27, 82–102, 118–138, and 141–161; these read TLLM…VLVC, AVSL…PVFF, APIG…LLLI, and YSSL…WWLD.

It belongs to the PlsY family. As to quaternary structure, probably interacts with PlsX.

It localises to the cell inner membrane. The enzyme catalyses an acyl phosphate + sn-glycerol 3-phosphate = a 1-acyl-sn-glycero-3-phosphate + phosphate. Its pathway is lipid metabolism; phospholipid metabolism. Functionally, catalyzes the transfer of an acyl group from acyl-phosphate (acyl-PO(4)) to glycerol-3-phosphate (G3P) to form lysophosphatidic acid (LPA). This enzyme utilizes acyl-phosphate as fatty acyl donor, but not acyl-CoA or acyl-ACP. The polypeptide is Glycerol-3-phosphate acyltransferase (Shewanella baltica (strain OS223)).